A 410-amino-acid polypeptide reads, in one-letter code: Gamma-glutamyl phosphate reductase (410 aa).

It belongs to the gamma-glutamyl phosphate reductase family.

Its subcellular location is the cytoplasm. It carries out the reaction L-glutamate 5-semialdehyde + phosphate + NADP(+) = L-glutamyl 5-phosphate + NADPH + H(+). The protein operates within amino-acid biosynthesis; L-proline biosynthesis; L-glutamate 5-semialdehyde from L-glutamate: step 2/2. Its function is as follows. Catalyzes the NADPH-dependent reduction of L-glutamate 5-phosphate into L-glutamate 5-semialdehyde and phosphate. The product spontaneously undergoes cyclization to form 1-pyrroline-5-carboxylate. The polypeptide is Gamma-glutamyl phosphate reductase (Campylobacter jejuni subsp. jejuni serotype O:2 (strain ATCC 700819 / NCTC 11168)).